The chain runs to 174 residues: Shikimate kinase 2 (174 aa).

12 to 17 (GCGKTT) is an ATP binding site. Mg(2+) contacts are provided by Thr16 and Asp32. Substrate is bound by residues Asp34, Arg58, and Gly79. The LID domain stretch occupies residues 112-126 (QAAPEEDLRPTLTGK). Position 120 (Arg120) interacts with ATP. Substrate is bound at residue Arg139.

Belongs to the shikimate kinase family. AroL subfamily. Monomer. Mg(2+) serves as cofactor.

It localises to the cytoplasm. The enzyme catalyses shikimate + ATP = 3-phosphoshikimate + ADP + H(+). It participates in metabolic intermediate biosynthesis; chorismate biosynthesis; chorismate from D-erythrose 4-phosphate and phosphoenolpyruvate: step 5/7. Functionally, catalyzes the specific phosphorylation of the 3-hydroxyl group of shikimic acid using ATP as a cosubstrate. This is Shikimate kinase 2 from Escherichia coli O81 (strain ED1a).